The primary structure comprises 173 residues: uncharacterized protein (173 aa).

The first 20 residues, 1 to 20 (MWYKVLGIVSLCSVYVSTQG), serve as a signal peptide directing secretion. A glycan (N-linked (GlcNAc...) asparagine) is linked at Asn53.

In terms of tissue distribution, component of the acid-insoluble organic matrix of calcified shell layers (at protein level).

The protein resides in the secreted. This is an uncharacterized protein from Haliotis asinina (Donkey's ear abalone).